The sequence spans 88 residues: Small ribosomal subunit protein bS20 (88 aa).

The segment at 1-21 is disordered; the sequence is MANTTSAKKATRKIARRTAVN.

The protein belongs to the bacterial ribosomal protein bS20 family.

Its function is as follows. Binds directly to 16S ribosomal RNA. This chain is Small ribosomal subunit protein bS20, found in Agrobacterium fabrum (strain C58 / ATCC 33970) (Agrobacterium tumefaciens (strain C58)).